The following is a 989-amino-acid chain: Phosphoenolpyruvate carboxylase (989 aa).

Residues His-175 and Lys-630 contribute to the active site.

It belongs to the PEPCase type 1 family. Mg(2+) serves as cofactor.

It catalyses the reaction oxaloacetate + phosphate = phosphoenolpyruvate + hydrogencarbonate. Its function is as follows. Forms oxaloacetate, a four-carbon dicarboxylic acid source for the tricarboxylic acid cycle. This chain is Phosphoenolpyruvate carboxylase, found in Prochlorococcus marinus (strain MIT 9301).